The primary structure comprises 279 residues: Thymidylate synthase (279 aa).

133-134 lines the dUMP pocket; sequence RR. The active-site Nucleophile is the C154. Residues 178–181, N189, and 219–221 each bind dUMP; these read RSND and HIY. D181 serves as a coordination point for (6R)-5,10-methylene-5,6,7,8-tetrahydrofolate. A278 provides a ligand contact to (6R)-5,10-methylene-5,6,7,8-tetrahydrofolate.

Belongs to the thymidylate synthase family. Bacterial-type ThyA subfamily. As to quaternary structure, homodimer.

The protein resides in the cytoplasm. The catalysed reaction is dUMP + (6R)-5,10-methylene-5,6,7,8-tetrahydrofolate = 7,8-dihydrofolate + dTMP. The protein operates within pyrimidine metabolism; dTTP biosynthesis. Catalyzes the reductive methylation of 2'-deoxyuridine-5'-monophosphate (dUMP) to 2'-deoxythymidine-5'-monophosphate (dTMP) while utilizing 5,10-methylenetetrahydrofolate (mTHF) as the methyl donor and reductant in the reaction, yielding dihydrofolate (DHF) as a by-product. This enzymatic reaction provides an intracellular de novo source of dTMP, an essential precursor for DNA biosynthesis. This chain is Thymidylate synthase, found in Streptococcus pneumoniae (strain ATCC 700669 / Spain 23F-1).